The primary structure comprises 475 residues: UDP-N-acetylmuramate--L-alanine ligase (475 aa).

G112–T118 provides a ligand contact to ATP.

The protein belongs to the MurCDEF family.

Its subcellular location is the cytoplasm. It carries out the reaction UDP-N-acetyl-alpha-D-muramate + L-alanine + ATP = UDP-N-acetyl-alpha-D-muramoyl-L-alanine + ADP + phosphate + H(+). Its pathway is cell wall biogenesis; peptidoglycan biosynthesis. In terms of biological role, cell wall formation. This chain is UDP-N-acetylmuramate--L-alanine ligase, found in Cupriavidus pinatubonensis (strain JMP 134 / LMG 1197) (Cupriavidus necator (strain JMP 134)).